Consider the following 342-residue polypeptide: Leucine-rich repeat-containing protein 23 (342 aa).

Acidic residues predominate over residues 1-30; the sequence is MSDEDDLEDFETDQDDLEREDDEKETEEWE. A disordered region spans residues 1 to 42; that stretch reads MSDEDDLEDFETDQDDLEREDDEKETEEWEDYRKEGEESEDW. Residues 3 to 27 are a coiled coil; the sequence is DEDDLEDFETDQDDLEREDDEKETE. LRR repeat units follow at residues 91–112, 113–133, 134–154, 155–176, 179–199, 200–221, 222–243, and 245–266; these read HLRYVDVSENHLTDLSPLNHLT, NLLWLKADGNQLRSARLNELP, YLQIASFAYNQITDTEGISHP, RLASLDLKGNRIHMVTGLDPQK, SLHTLELRGNQLNSTLGINLP, KLKNLFLAQNMLKKVEGLENLS, NLTTLHLRDNQIETLSGFSKEM, and SLQYLNLRGNMVADLGELAKLR. Residues 207–342 are interaction with RSPH9; sequence AQNMLKKVEG…PESELDQSST (136 aa). Residues 279–317 form the LRRCT domain; that stretch reads NPCTDENDYRQEALVQIAHLERLDKEFYEEEERAEADEI. Residues 306 to 332 are a coiled coil; sequence YEEEERAEADEIRQRMKEEQEQEAEVE. The interval 307-342 is disordered; that stretch reads EEEERAEADEIRQRMKEEQEQEAEVEPESELDQSST. The span at 314 to 324 shows a compositional bias: basic and acidic residues; it reads ADEIRQRMKEE. Residues 325–342 are compositionally biased toward acidic residues; it reads QEQEAEVEPESELDQSST.

Component of the axonemal radial spoke complex. Interacts with RSPH3. Interacts with RSPH9.

The protein resides in the cytoplasm. It is found in the cytoskeleton. It localises to the flagellum axoneme. Its function is as follows. Essential for sperm motility and male fertility. Plays an important role in the proper assembly of the third radial spoke (RS3) head and the bridge structure between RS2 and RS3 in the sperm flagella. The chain is Leucine-rich repeat-containing protein 23 (LRRC23) from Bos taurus (Bovine).